The primary structure comprises 147 residues: MVHFTAEEKSVITGLWGKVNVEETGGQAVGRLLVVYPWTQRFFDSFGNMSSPSAIMGNPKVKAHGKKVLTAFGDAVKNMDNLKGTFAKLSELHCDKLHVDPENFRLLGNMIVIILASHFGGEFTPEVQAAWQKLVAGVATALAHKYH.

A Globin domain is found at 3-147 (HFTAEEKSVI…VATALAHKYH (145 aa)). S51 is subject to Phosphoserine. The heme b site is built by H64 and H93.

The protein belongs to the globin family. Red blood cells.

Hemoglobin epsilon chain is a beta-type chain found in early embryos. In Sus scrofa (Pig), this protein is Hemoglobin subunit epsilon (HBE1).